Here is a 962-residue protein sequence, read N- to C-terminus: Protein suppressor of underreplication (962 aa).

Disordered regions lie at residues 353–413 (EIVT…TRAA), 438–590 (TPTP…LSGS), 658–712 (NSSH…SPDL), 866–900 (QERTQPSNGNRNSIVASLRKSPKSPKHGARTTQAT), and 916–962 (QTSS…ELFK). A compositionally biased stretch (basic residues) spans 372–382 (PRTKSKKKCSK). The segment covering 386-395 (PCKEADLTDS) has biased composition (basic and acidic residues). Composition is skewed to polar residues over residues 438–448 (TPTPSGATTAI) and 480–489 (LTRSAESKIN). The segment covering 524-552 (VKQESKAKAKPEQKKKIKTVDKPAQETPK) has biased composition (basic and acidic residues). Residues 553-562 (RKPGRPRKCK) show a composition bias toward basic residues. The segment covering 564-576 (LTETLGKSKTKPN) has biased composition (polar residues). Positions 673–683 (RRTKALKRKRK) are enriched in basic residues. Composition is skewed to polar residues over residues 703–712 (RSATNKSPDL) and 866–880 (QERTQPSNGNRNSIV). The segment covering 885 to 894 (KSPKSPKHGA) has biased composition (basic residues). The segment covering 916-944 (QTSSVESVSAPSTPVNPSTSAAACQTRTA) has biased composition (polar residues). The segment covering 953-962 (TKRKRLELFK) has biased composition (basic residues).

It localises to the nucleus. The protein resides in the chromosome. Required for underreplication of DNA, which is found in many late replicating euchromatic regions of salivary gland polytene chromosomes. Controls chromatin organization in polytene chromosomes. This is Protein suppressor of underreplication (SuUR) from Drosophila erecta (Fruit fly).